A 103-amino-acid chain; its full sequence is Protein S100-A16 (103 aa).

Residues V12–N47 enclose the EF-hand 1; degenerate domain. One can recognise an EF-hand 2 domain in the interval G54–P89. 5 residues coordinate Ca(2+): D67, N69, D71, R73, and E78.

This sequence belongs to the S-100 family. As to quaternary structure, homodimer. Interacts with TP53.

The protein resides in the nucleus. It localises to the nucleolus. It is found in the cytoplasm. In terms of biological role, calcium-binding protein. Binds one calcium ion per monomer. Can promote differentiation of adipocytes (in vitro). Overexpression in preadipocytes increases their proliferation, enhances adipogenesis and reduces insulin-stimulated glucose uptake. The protein is Protein S100-A16 (S100A16) of Bos taurus (Bovine).